A 638-amino-acid polypeptide reads, in one-letter code: Broad-specificity ulvan lyase (638 aa).

The first 27 residues, Met-1 to Ala-27, serve as a signal peptide directing secretion.

It belongs to the polysaccharide lyase 37 family.

It is found in the periplasm. It carries out the reaction Endolytic cleavage of (1-&gt;4)-beta-galactosaminic bonds between N-acetylgalactosamine and either D-glucuronic acid or L-iduronic acid to produce a mixture of Delta(4)-unsaturated oligosaccharides of different sizes that are ultimately degraded to Delta(4)-unsaturated tetra- and disaccharides.. The catalysed reaction is Elimination of sulfate, appears to act on linkages between N-acetyl-D-glucosamine and uronate. Product is an unsaturated sugar.. In terms of biological role, broad-specificity lyase involved in ulvan degradation. Ulvan is the main polysaccharide component of the Ulvales (green seaweed) cell wall. It is composed of disaccharide building blocks comprising 3-sulfated rhamnose (Rha3S) linked to D-glucuronic acid (GlcA), L-iduronic acid (IduA), or D-xylose (Xyl). Ulvan lyase catalyzes the endolytic cleavage of the glycosidic bond between Rha3S and the uronic acids GlcA or IduA, producing oligosaccharides that have unsaturated 4-deoxy-L-threo-hex-4-enopyranosiduronic acid (deltaUA) at the non-reducing end. This results eventually in the degradation of the ulvan polysaccharide into deltaUA-Rha3S disaccharides and deltaUA-Rha3S-Xyl-Rha3S tetrasaccharides. It is also able to degrade the glycosaminoglycans heparan sulfate and chondroitin sulfate. Not active against pectin, xanthan or alginate. The sequence is that of Broad-specificity ulvan lyase from Formosa agariphila (strain DSM 15362 / KCTC 12365 / LMG 23005 / KMM 3901 / M-2Alg 35-1).